The chain runs to 461 residues: Bifunctional protein GlmU (461 aa).

Positions Met-1 to Arg-229 are pyrophosphorylase. UDP-N-acetyl-alpha-D-glucosamine-binding positions include Leu-8 to Gly-11, Lys-22, Gln-72, and Gly-77 to Thr-78. Residue Asp-102 participates in Mg(2+) binding. UDP-N-acetyl-alpha-D-glucosamine-binding residues include Gly-139, Glu-154, Asn-169, and Asn-227. A Mg(2+)-binding site is contributed by Asn-227. The interval Ile-230–Asp-250 is linker. An N-acetyltransferase region spans residues Gly-251 to Lys-461. The UDP-N-acetyl-alpha-D-glucosamine site is built by Arg-332 and Lys-350. Catalysis depends on His-362, which acts as the Proton acceptor. UDP-N-acetyl-alpha-D-glucosamine-binding residues include Tyr-365 and Asn-376. The acetyl-CoA site is built by Ala-422 and Arg-439.

The protein in the N-terminal section; belongs to the N-acetylglucosamine-1-phosphate uridyltransferase family. In the C-terminal section; belongs to the transferase hexapeptide repeat family. As to quaternary structure, homotrimer. Mg(2+) is required as a cofactor.

The protein resides in the cytoplasm. The catalysed reaction is alpha-D-glucosamine 1-phosphate + acetyl-CoA = N-acetyl-alpha-D-glucosamine 1-phosphate + CoA + H(+). The enzyme catalyses N-acetyl-alpha-D-glucosamine 1-phosphate + UTP + H(+) = UDP-N-acetyl-alpha-D-glucosamine + diphosphate. The protein operates within nucleotide-sugar biosynthesis; UDP-N-acetyl-alpha-D-glucosamine biosynthesis; N-acetyl-alpha-D-glucosamine 1-phosphate from alpha-D-glucosamine 6-phosphate (route II): step 2/2. It functions in the pathway nucleotide-sugar biosynthesis; UDP-N-acetyl-alpha-D-glucosamine biosynthesis; UDP-N-acetyl-alpha-D-glucosamine from N-acetyl-alpha-D-glucosamine 1-phosphate: step 1/1. It participates in bacterial outer membrane biogenesis; LPS lipid A biosynthesis. Catalyzes the last two sequential reactions in the de novo biosynthetic pathway for UDP-N-acetylglucosamine (UDP-GlcNAc). The C-terminal domain catalyzes the transfer of acetyl group from acetyl coenzyme A to glucosamine-1-phosphate (GlcN-1-P) to produce N-acetylglucosamine-1-phosphate (GlcNAc-1-P), which is converted into UDP-GlcNAc by the transfer of uridine 5-monophosphate (from uridine 5-triphosphate), a reaction catalyzed by the N-terminal domain. The sequence is that of Bifunctional protein GlmU from Lactobacillus delbrueckii subsp. bulgaricus (strain ATCC BAA-365 / Lb-18).